Here is a 350-residue protein sequence, read N- to C-terminus: Hydroxymethylglutaryl-CoA synthase (350 aa).

D30 lines the (3S)-3-hydroxy-3-methylglutaryl-CoA pocket. E82 (proton donor/acceptor) is an active-site residue. (3S)-3-hydroxy-3-methylglutaryl-CoA contacts are provided by C114, S155, T203, and H236. C114 serves as the catalytic Acyl-thioester intermediate. The active-site Proton donor/acceptor is the H236. R241 is a CoA binding site. (3S)-3-hydroxy-3-methylglutaryl-CoA is bound by residues R245, N268, and S298.

This sequence belongs to the thiolase-like superfamily. Archaeal HMG-CoA synthase family. In terms of assembly, interacts with acetoacetyl-CoA thiolase that catalyzes the precedent step in the pathway and with a DUF35 protein. The acetoacetyl-CoA thiolase/HMG-CoA synthase complex channels the intermediate via a fused CoA-binding site, which allows for efficient coupling of the endergonic thiolase reaction with the exergonic HMGCS reaction.

The enzyme catalyses acetoacetyl-CoA + acetyl-CoA + H2O = (3S)-3-hydroxy-3-methylglutaryl-CoA + CoA + H(+). Its pathway is metabolic intermediate biosynthesis; (R)-mevalonate biosynthesis; (R)-mevalonate from acetyl-CoA: step 2/3. In terms of biological role, catalyzes the condensation of acetyl-CoA with acetoacetyl-CoA to form 3-hydroxy-3-methylglutaryl-CoA (HMG-CoA). Functions in the mevalonate (MVA) pathway leading to isopentenyl diphosphate (IPP), a key precursor for the biosynthesis of isoprenoid compounds that are building blocks of archaeal membrane lipids. The polypeptide is Hydroxymethylglutaryl-CoA synthase (Pyrobaculum calidifontis (strain DSM 21063 / JCM 11548 / VA1)).